We begin with the raw amino-acid sequence, 125 residues long: Kappa-casein (125 aa).

The interval 42-63 (LPNIDPPTVERRPRPRPSFIAI) is disordered. T97 carries an O-linked (GalNAc...) threonine glycan. S104 is subject to Phosphoserine; alternate. S104 carries O-linked (GalNAc...) serine; alternate glycosylation. Residue T121 is glycosylated (O-linked (GalNAc...) threonine). Phosphoserine is present on S122.

Belongs to the kappa-casein family. Mammary gland specific. Secreted in milk.

It is found in the secreted. Kappa-casein stabilizes micelle formation, preventing casein precipitation in milk. This chain is Kappa-casein (CSN3), found in Lama guanicoe (Guanaco).